We begin with the raw amino-acid sequence, 361 residues long: dTDP-glucose 4,6-dehydratase (361 aa).

Residues 11–12, 32–35, 58–59, 80–84, and T99 each bind NAD(+); these read FI, DKLT, DI, and LAAES. Substrate is bound at residue S84. T133 serves as a coordination point for substrate. The active-site Proton donor is D134. Residues E135 and Y167 each act as proton acceptor in the active site. 167–171 provides a ligand contact to NAD(+); sequence YSASK. Residue N196 participates in substrate binding. N197 lines the NAD(+) pocket. Substrate contacts are provided by residues 206–207, 222–224, R231, N266, and 296–300; these read KL, PIY, and DRPGH.

Belongs to the NAD(P)-dependent epimerase/dehydratase family. dTDP-glucose dehydratase subfamily. As to quaternary structure, homodimer. It depends on NAD(+) as a cofactor.

It catalyses the reaction dTDP-alpha-D-glucose = dTDP-4-dehydro-6-deoxy-alpha-D-glucose + H2O. It participates in carbohydrate biosynthesis; dTDP-L-rhamnose biosynthesis. It functions in the pathway bacterial outer membrane biogenesis; LPS O-antigen biosynthesis. Catalyzes the dehydration of dTDP-D-glucose to form dTDP-6-deoxy-D-xylo-4-hexulose via a three-step process involving oxidation, dehydration and reduction. This chain is dTDP-glucose 4,6-dehydratase (rfbB), found in Shigella flexneri.